The chain runs to 545 residues: Arginine-containing cyclodipeptide synthase ateA (545 aa).

A compositionally biased stretch (polar residues) spans 390 to 425 (GNQQTPTQSADMDSTVSHRQQQPASSRSYTSKQNQM). A disordered region spans residues 390 to 433 (GNQQTPTQSADMDSTVSHRQQQPASSRSYTSKQNQMPRPLVISV). Positions 434 to 438 (DDPSE) match the Conserved DDXXE motif motif.

It belongs to the arginine-containing cyclodipeptide synthase family.

It carries out the reaction L-glutamyl-tRNA(Glu) + L-arginyl-tRNA(Arg) = cyclo(L-arginyl-L-glutamyl) + tRNA(Glu) + tRNA(Arg) + 2 H(+). The protein operates within secondary metabolite biosynthesis. In terms of biological role, arginine-containing cyclodipeptide synthase; part of the cluster that mediates the biosynthesis of a highly modified cyclo-arginine-glutamate dipeptide (cRE). Within the pathway, ateA acts as the scaffold-generating enzyme and is responsible for formation of the cyclo-Arg-Glu diketopiperazine (cRW) from L-arginyl-tRNA(Arg) + L-glutamyl-tRNA(Glu). Additional enzymes from the cluster then further modify the cyclo-Arg-Glu diketopiperazine (cRW) scaffold. This is Arginine-containing cyclodipeptide synthase ateA from Aspergillus terreus.